Reading from the N-terminus, the 108-residue chain is N(4)-acetylcytidine amidohydrolase (108 aa).

In terms of domain architecture, ASCH spans 5-102; it reads ITFFQRLERS…NDLFFISFRV (98 aa). K20 functions as the Proton acceptor in the catalytic mechanism. The Nucleophile role is filled by T23. Catalysis depends on E73, which acts as the Proton donor.

This sequence belongs to the N(4)-acetylcytidine amidohydrolase family.

It carries out the reaction N(4)-acetylcytidine + H2O = cytidine + acetate + H(+). It catalyses the reaction N(4)-acetyl-2'-deoxycytidine + H2O = 2'-deoxycytidine + acetate + H(+). The catalysed reaction is N(4)-acetylcytosine + H2O = cytosine + acetate + H(+). Catalyzes the hydrolysis of N(4)-acetylcytidine (ac4C). The polypeptide is N(4)-acetylcytidine amidohydrolase (Moritella marina (Vibrio marinus)).